We begin with the raw amino-acid sequence, 89 residues long: Large ribosomal subunit protein bL27 (89 aa).

A disordered region spans residues 1–26 (MAHKKGVGSSRNGRDSESKRLGVKEG). Residues 12–26 (NGRDSESKRLGVKEG) are compositionally biased toward basic and acidic residues.

Belongs to the bacterial ribosomal protein bL27 family.

This chain is Large ribosomal subunit protein bL27, found in Desulforamulus reducens (strain ATCC BAA-1160 / DSM 100696 / MI-1) (Desulfotomaculum reducens).